The following is a 193-amino-acid chain: Putative nitroreductase HBN1 (193 aa).

Ser-2 is modified (N-acetylserine).

It belongs to the nitroreductase family. Requires FMN as cofactor.

Its subcellular location is the cytoplasm. The protein localises to the nucleus. The chain is Putative nitroreductase HBN1 (HBN1) from Saccharomyces cerevisiae (strain ATCC 204508 / S288c) (Baker's yeast).